A 404-amino-acid polypeptide reads, in one-letter code: Argininosuccinate synthase (404 aa).

ATP contacts are provided by residues 10–18 and Ala38; that span reads AYSGGVDTS. Residue Tyr89 participates in L-citrulline binding. Position 119 (Gly119) interacts with ATP. Residues Thr121, Asn125, and Asp126 each coordinate L-aspartate. Asn125 is an L-citrulline binding site. 5 residues coordinate L-citrulline: Arg129, Ser177, Ser186, Glu262, and Tyr274.

The protein belongs to the argininosuccinate synthase family. Type 1 subfamily. Homotetramer.

The protein localises to the cytoplasm. It carries out the reaction L-citrulline + L-aspartate + ATP = 2-(N(omega)-L-arginino)succinate + AMP + diphosphate + H(+). It participates in amino-acid biosynthesis; L-arginine biosynthesis; L-arginine from L-ornithine and carbamoyl phosphate: step 2/3. This chain is Argininosuccinate synthase, found in Prochlorococcus marinus (strain MIT 9301).